The chain runs to 399 residues: Chromosomal replication initiator protein DnaA (399 aa).

The domain I, interacts with DnaA modulators stretch occupies residues 1–64; it reads MELNALIKKI…EEEVRKLIEV (64 aa). The segment at 64 to 77 is domain II; the sequence is VKEKEEKKKVEIKD. A domain III, AAA+ region region spans residues 78 to 290; the sequence is FLNPKYTLEN…GKIKLIKLKG (213 aa). ADP is bound by residues I89, N94, G122, T123, G124, K125, T126, and H127. ATP is bound at residue I89. ATP is bound at residue G122. 4 residues coordinate ATP: G124, K125, T126, and H127. T126 is a Mg(2+) binding site. Residue V156 coordinates ssDNA. Position 180 (D180) interacts with ATP. D181 is a Mg(2+) binding site. The ssDNA site is built by K188, R190, and T191. R277 contributes to the ATP binding site. Positions 291–399 are domain IV, binds dsDNA; the sequence is FEGLERKERK…LEKQAFDKIC (109 aa).

It belongs to the DnaA family. As to quaternary structure, in the presence of ATP analog AMP-PCP forms a linear, right-handed spiral filament with 4 subunits arranged head-to-tail, about 122 Angstroms wide and about 360 Angstroms long. Mg(2+)-AMP-PCP binds at the subunit interface with the gamma phosphate coordinated by adjacent subunits. dsDNA probably wraps on the outside of the filament. ssDNA binds to the center of the helical filament via the AAA+ domain, which stretches the DNA.

The protein resides in the cytoplasm. Functionally, plays an essential role in the initiation and regulation of chromosomal replication. ATP-DnaA binds to the origin of replication (oriC) to initiate formation of the DNA replication initiation complex once per cell cycle. Binds the DnaA box (a 9 base pair repeat at the origin) and separates the double-stranded (ds)DNA. Forms a right-handed helical filament on oriC DNA; dsDNA binds to the exterior of the filament while single-stranded (ss)DNA is stabiized in the filament's interior. The ATP-DnaA-oriC complex binds and stabilizes one strand of the AT-rich DNA unwinding element (DUE), permitting loading of DNA polymerase. After initiation quickly degrades to an ADP-DnaA complex that is not apt for DNA replication. Binds acidic phospholipids. Its function is as follows. Able to melt short unstable dsDNA (15-mer with melting temperature, TM, 43 degrees Celsius) in the presence of a non-hydrolyzable ATP analog; a more stable dsDNA (20-mer, TM 55 degrees Celsius) is poor substrate. ADP does not support dsDNA melting. Addition of DnaA-AMP-PCP (an ATP analog, beta,gamma-methyleneadenosine 5'-triphosphate) to an oric-containing plasmid causes a DNA shift to more positively supercoiled topological species, stabilizing a positive wrap and right-handed filament as seen in the crystal structure without DNA. Filament formation generated by positive supercoiling may destabilize the origin unwinding element through compensatory negative supercoiling strain. This is Chromosomal replication initiator protein DnaA from Aquifex aeolicus (strain VF5).